Consider the following 274-residue polypeptide: Rhamnulose-1-phosphate aldolase (274 aa).

The active site involves glutamate 117. Zn(2+) is bound by residues histidine 141, histidine 143, and histidine 212.

The protein belongs to the aldolase class II family. RhaD subfamily. In terms of assembly, homotetramer. The cofactor is Zn(2+).

It is found in the cytoplasm. The catalysed reaction is L-rhamnulose 1-phosphate = (S)-lactaldehyde + dihydroxyacetone phosphate. It functions in the pathway carbohydrate degradation; L-rhamnose degradation; glycerone phosphate from L-rhamnose: step 3/3. Catalyzes the reversible cleavage of L-rhamnulose-1-phosphate to dihydroxyacetone phosphate (DHAP) and L-lactaldehyde. This chain is Rhamnulose-1-phosphate aldolase, found in Yersinia pestis.